Reading from the N-terminus, the 65-residue chain is MAAFVESARAGAGADEVIQLVSDGVNEYSEKMMEGVVACPRILMPCKVNDDCLRGCKCLSNGYCG.

Disulfide bonds link Cys-39–Cys-56, Cys-46–Cys-58, and Cys-52–Cys-64.

It belongs to the protease inhibitor I7 (squash-type serine protease inhibitor) family.

The protein resides in the secreted. In terms of biological role, inhibits trypsin. The protein is Trypsin inhibitor 1 of Trichosanthes kirilowii (Chinese snake gourd).